A 124-amino-acid chain; its full sequence is Putative membrane protein insertion efficiency factor (124 aa).

Residues methionine 1–threonine 12 are compositionally biased toward basic and acidic residues. The disordered stretch occupies residues methionine 1 to glycine 26.

Belongs to the UPF0161 family.

The protein resides in the cell inner membrane. Functionally, could be involved in insertion of integral membrane proteins into the membrane. The chain is Putative membrane protein insertion efficiency factor from Rhizobium meliloti (strain 1021) (Ensifer meliloti).